Here is a 39-residue protein sequence, read N- to C-terminus: Metallocarboxypeptidase inhibitor (39 aa).

Gln-1 is subject to Pyrrolidone carboxylic acid. 3 disulfide bridges follow: Cys-8–Cys-24, Cys-12–Cys-27, and Cys-18–Cys-34.

In terms of tissue distribution, highly concentrated in tubers. Closely related but distinct forms of MCPI are present in leaves, stems and buds.

May play a defensive role against insect attacks. Inhibits A.aegypti carboxypeptidase CPB1. This chain is Metallocarboxypeptidase inhibitor, found in Solanum tuberosum (Potato).